The following is a 447-amino-acid chain: UPF0210 protein lp_2507 (447 aa).

This sequence belongs to the UPF0210 family. In terms of assembly, homodimer.

The sequence is that of UPF0210 protein lp_2507 from Lactiplantibacillus plantarum (strain ATCC BAA-793 / NCIMB 8826 / WCFS1) (Lactobacillus plantarum).